Reading from the N-terminus, the 428-residue chain is RUN domain-containing protein 3A (428 aa).

Residues 52-182 (DDSSEEFINF…IDFSFCLKGE (131 aa)) enclose the RUN domain. A coiled-coil region spans residues 237 to 314 (ESWRNKCRKM…ELQEQLTSLI (78 aa)). The interval 349-375 (HRGSFPSPEPHISLTTGSQRTERKQNG) is disordered.

The protein belongs to the RUNDC3 family.

The polypeptide is RUN domain-containing protein 3A (rundc3a) (Danio rerio (Zebrafish)).